We begin with the raw amino-acid sequence, 186 residues long: Ribosome-recycling factor (186 aa).

The protein belongs to the RRF family.

It is found in the cytoplasm. In terms of biological role, responsible for the release of ribosomes from messenger RNA at the termination of protein biosynthesis. May increase the efficiency of translation by recycling ribosomes from one round of translation to another. The sequence is that of Ribosome-recycling factor from Wolinella succinogenes (strain ATCC 29543 / DSM 1740 / CCUG 13145 / JCM 31913 / LMG 7466 / NCTC 11488 / FDC 602W) (Vibrio succinogenes).